A 416-amino-acid polypeptide reads, in one-letter code: Histidine--tRNA ligase (416 aa).

The protein belongs to the class-II aminoacyl-tRNA synthetase family. Homodimer.

It localises to the cytoplasm. The catalysed reaction is tRNA(His) + L-histidine + ATP = L-histidyl-tRNA(His) + AMP + diphosphate + H(+). The polypeptide is Histidine--tRNA ligase (Clostridium kluyveri (strain NBRC 12016)).